Here is a 482-residue protein sequence, read N- to C-terminus: Lipoamide acyltransferase component of branched-chain alpha-keto acid dehydrogenase complex, mitochondrial (482 aa).

The transit peptide at 1–61 directs the protein to the mitochondrion; it reads MAAARVLRTW…HSLRTAAVLQ (61 aa). Residues 64 to 139 enclose the Lipoyl-binding domain; it reads VVQFKLSDIG…YVGKPLIDIE (76 aa). Lys105 is subject to N6-lipoyllysine. Position 133 is an N6-succinyllysine (Lys133). Residues 145-160 form a critical for association with PPM1K region; it reads DSEEDVVETPAVSHDE. Residues 172-209 enclose the Peripheral subunit-binding (PSBD) domain; the sequence is LATPAVRRLAMENNIKLSEVVGSGKDGRILKEDILSFL. Residue Lys196 is modified to N6-acetyllysine; alternate. An N6-succinyllysine; alternate modification is found at Lys196. Lys202 is modified (N6-acetyllysine). The tract at residues 217–252 is disordered; that stretch reads LPPSPKSEITPPPPQPKDRTFPTPIAKPPVFTGKDR. Residues 218–231 are compositionally biased toward pro residues; it reads PPSPKSEITPPPPQ. A Phosphoserine modification is found at Ser220. Residues Lys243 and Lys250 each carry the N6-acetyllysine modification. Lys261 bears the N6-succinyllysine mark. Position 289 is an N6-acetyllysine; alternate (Lys289). Lys289 carries the N6-succinyllysine; alternate modification. Residue Arg291 participates in CoA binding. An N6-acetyllysine mark is found at Lys295 and Lys304. CoA contacts are provided by Ser306, Asp349, Gln378, Ser399, Asn400, Ser403, Gly424, and Ile426. An N6-acetyllysine modification is found at Lys435. Lys440 bears the N6-acetyllysine; alternate mark. Lys440 carries the N6-succinyllysine; alternate modification. Residues His452 and Asp456 contribute to the active site.

The protein belongs to the 2-oxoacid dehydrogenase family. As to quaternary structure, forms a 24-polypeptide structural core with octahedral symmetry that represents the E2 component of the branched-chain alpha-ketoacid dehydrogenase (BCKDH) complex. The BCKDH complex is composed of three major building blocks E1, E2 and E3. It is organized around E2, a 24-meric cubic core composed of DBT, to which are associated 6 to 12 copies of E1, and approximately 6 copies of the dehydrogenase E3, a DLD dimer. Interacts with PPM1K with a 24:1 stoichiometry; the N-terminal region (residues 49-61) of PPM1K and C-terminal linker of the lipoyl domain of DBT/E2 (residues 145-160) are critical for this interaction whereas the lipoyl prosthetic group is dispensable. This interaction requires colocalization in mitochondria. PPM1K competes with BCKDK for binding to DBT; this interaction is modulated by branched-chain alpha-keto acids (BCKAs). At steady state, BCKDH holoenzyme preferentially binds BCKDK and BCKDHA is phosphorylated. In response to high levels of BCKAs, BCKDK is replaced by PPM1K leading to BCKDHA dephosphorylation. Requires (R)-lipoate as cofactor.

It is found in the mitochondrion matrix. The enzyme catalyses N(6)-[(R)-dihydrolipoyl]-L-lysyl-[protein] + 2-methylpropanoyl-CoA = N(6)-[(R)-S(8)-2-methylpropanoyldihydrolipoyl]-L-lysyl-[protein] + CoA. Its function is as follows. The branched-chain alpha-keto dehydrogenase complex catalyzes the overall conversion of alpha-keto acids to acyl-CoA and CO(2). It contains multiple copies of three enzymatic components: branched-chain alpha-keto acid decarboxylase (E1), lipoamide acyltransferase (E2) and lipoamide dehydrogenase (E3). Within this complex, the catalytic function of this enzyme is to accept, and to transfer to coenzyme A, acyl groups that are generated by the branched-chain alpha-keto acid decarboxylase component. In Mus musculus (Mouse), this protein is Lipoamide acyltransferase component of branched-chain alpha-keto acid dehydrogenase complex, mitochondrial (Dbt).